Reading from the N-terminus, the 164-residue chain is ATP synthase B' chain, cyanelle (164 aa).

A helical membrane pass occupies residues 26 to 46 (ATLPVMMVQLLVLMLILNAVF).

It belongs to the ATPase B chain family. As to quaternary structure, F-type ATPases have 2 components, F(1) - the catalytic core - and F(0) - the membrane proton channel. F(1) has five subunits: alpha(3), beta(3), gamma(1), delta(1), epsilon(1). F(0) has four main subunits: a(1), b(1), b'(1) and c(10-14). The alpha and beta chains form an alternating ring which encloses part of the gamma chain. F(1) is attached to F(0) by a central stalk formed by the gamma and epsilon chains, while a peripheral stalk is formed by the delta, b and b' chains.

Its subcellular location is the plastid. It localises to the cyanelle thylakoid membrane. F(1)F(0) ATP synthase produces ATP from ADP in the presence of a proton or sodium gradient. F-type ATPases consist of two structural domains, F(1) containing the extramembraneous catalytic core and F(0) containing the membrane proton channel, linked together by a central stalk and a peripheral stalk. During catalysis, ATP synthesis in the catalytic domain of F(1) is coupled via a rotary mechanism of the central stalk subunits to proton translocation. In terms of biological role, component of the F(0) channel, it forms part of the peripheral stalk, linking F(1) to F(0). The b'-subunit is a diverged and duplicated form of b found in plants and photosynthetic bacteria. The sequence is that of ATP synthase B' chain, cyanelle from Cyanophora paradoxa.